The primary structure comprises 413 residues: Arginine biosynthesis bifunctional protein ArgJ (413 aa).

Residues T163, K189, T200, E286, N408, and T413 each contribute to the substrate site. The active-site Nucleophile is the T200.

Belongs to the ArgJ family. As to quaternary structure, heterotetramer of two alpha and two beta chains.

It localises to the cytoplasm. It carries out the reaction N(2)-acetyl-L-ornithine + L-glutamate = N-acetyl-L-glutamate + L-ornithine. The catalysed reaction is L-glutamate + acetyl-CoA = N-acetyl-L-glutamate + CoA + H(+). It participates in amino-acid biosynthesis; L-arginine biosynthesis; L-ornithine and N-acetyl-L-glutamate from L-glutamate and N(2)-acetyl-L-ornithine (cyclic): step 1/1. The protein operates within amino-acid biosynthesis; L-arginine biosynthesis; N(2)-acetyl-L-ornithine from L-glutamate: step 1/4. Catalyzes two activities which are involved in the cyclic version of arginine biosynthesis: the synthesis of N-acetylglutamate from glutamate and acetyl-CoA as the acetyl donor, and of ornithine by transacetylation between N(2)-acetylornithine and glutamate. The chain is Arginine biosynthesis bifunctional protein ArgJ from Staphylococcus aureus (strain COL).